The chain runs to 320 residues: Nod factor export ATP-binding protein I (320 aa).

Residues 15-245 enclose the ABC transporter domain; it reads VSATGVWKKR…LGALKILEID (231 aa). 47 to 54 provides a ligand contact to ATP; that stretch reads GTNGAGKS.

It belongs to the ABC transporter superfamily. Lipooligosaccharide exporter (TC 3.A.1.102) family. In terms of assembly, the complex is composed of two ATP-binding proteins (NodI) and two transmembrane proteins (NodJ).

It localises to the cell inner membrane. In terms of biological role, part of the ABC transporter complex NodIJ involved in the export of the nodulation factors (Nod factors), the bacterial signal molecules that induce symbiosis and subsequent nodulation induction. Nod factors are LCO (lipo-chitin oligosaccharide), a modified beta-1,4-linked N-acetylglucosamine oligosaccharide. This subunit is responsible for energy coupling to the transport system. The polypeptide is Nod factor export ATP-binding protein I (Azorhizobium caulinodans (strain ATCC 43989 / DSM 5975 / JCM 20966 / LMG 6465 / NBRC 14845 / NCIMB 13405 / ORS 571)).